Consider the following 435-residue polypeptide: uncharacterized protein (435 aa).

9 helical membrane-spanning segments follow: residues 40 to 60 (LVST…EAVF), 103 to 123 (VLWT…WLIL), 133 to 153 (IMLA…IYNP), 195 to 215 (LIHE…IIVL), 226 to 246 (ICTA…AVVG), 313 to 333 (VAVV…LFFV), 358 to 378 (LALP…AVDW), 381 to 401 (WWVM…IDRP), and 414 to 434 (VFVC…NNIG).

Its subcellular location is the cell membrane. This is an uncharacterized protein from Mycobacterium bovis (strain ATCC BAA-935 / AF2122/97).